Consider the following 875-residue polypeptide: Valine--tRNA ligase (875 aa).

The 'HIGH' region signature appears at 43–53; that stretch reads PNVTGVLHMGH. Residues 534–538 carry the 'KMSKS' region motif; it reads KMSKS. Residue Lys537 participates in ATP binding. Positions 805-875 form a coiled coil; sequence GNLINTEEEL…LKESIAALKK (71 aa).

The protein belongs to the class-I aminoacyl-tRNA synthetase family. ValS type 1 subfamily. Monomer.

It localises to the cytoplasm. It catalyses the reaction tRNA(Val) + L-valine + ATP = L-valyl-tRNA(Val) + AMP + diphosphate. Functionally, catalyzes the attachment of valine to tRNA(Val). As ValRS can inadvertently accommodate and process structurally similar amino acids such as threonine, to avoid such errors, it has a 'posttransfer' editing activity that hydrolyzes mischarged Thr-tRNA(Val) in a tRNA-dependent manner. This is Valine--tRNA ligase from Phocaeicola vulgatus (strain ATCC 8482 / DSM 1447 / JCM 5826 / CCUG 4940 / NBRC 14291 / NCTC 11154) (Bacteroides vulgatus).